Here is a 579-residue protein sequence, read N- to C-terminus: Probable zinc metalloprotease EGY1, chloroplastic (579 aa).

Disordered stretches follow at residues Met1 to Ala42 and Gly78 to Pro146. The N-terminal 44 residues, Met1–Cys44, are a transit peptide targeting the chloroplast. Residues Leu16–Ala42 are compositionally biased toward low complexity. Over residues Gly78–Gly92 the composition is skewed to gly residues. 2 stretches are compositionally biased toward low complexity: residues Ala104 to Val115 and Ser125 to Gly137. Helical transmembrane passes span Tyr272–Ala292, Leu321–Phe341, Leu357–Phe377, Met392–Leu412, Ala419–Val439, Ala452–Phe472, Leu505–Ile525, and Ala547–Leu567.

This sequence belongs to the peptidase M50B family.

The protein resides in the plastid. Its subcellular location is the chloroplast membrane. Functionally, probable membrane-associated metalloprotease that may be involved in chloroplast development. The polypeptide is Probable zinc metalloprotease EGY1, chloroplastic (EGY1) (Oryza sativa subsp. japonica (Rice)).